The following is a 230-amino-acid chain: MSNVVPTPVFPLFAQPFATRLERALQHLRIGRPVILMDDFDRENEADLIVAADKLTVPVMAQLIRDGSGIVCLCLPGETLDRLELPPMVDSNRSRYSTAFTVSIEAREGVTTGVSAVDRVTTIRAAIAPGARSGDVVSPGHVFPLRAQPGGVLTRRGHTEGSVDLAALAGLRPAGVLCELMNADGTMMRGASLERYAAKEGLVALAIDELAAHLQARGATGAPAELAVAA.

D-ribulose 5-phosphate-binding positions include 42 to 43 (RE), D47, 155 to 159 (RRGHT), and E179. Position 43 (E43) interacts with Mg(2+). H158 is a Mg(2+) binding site.

This sequence belongs to the DHBP synthase family. Homodimer. Requires Mg(2+) as cofactor. The cofactor is Mn(2+).

It carries out the reaction D-ribulose 5-phosphate = (2S)-2-hydroxy-3-oxobutyl phosphate + formate + H(+). It functions in the pathway cofactor biosynthesis; riboflavin biosynthesis; 2-hydroxy-3-oxobutyl phosphate from D-ribulose 5-phosphate: step 1/1. Its function is as follows. Catalyzes the conversion of D-ribulose 5-phosphate to formate and 3,4-dihydroxy-2-butanone 4-phosphate. This is 3,4-dihydroxy-2-butanone 4-phosphate synthase from Bordetella pertussis (strain Tohama I / ATCC BAA-589 / NCTC 13251).